The primary structure comprises 203 residues: Cutinase pbc1 (203 aa).

The N-terminal stretch at 1 to 18 (MKVTALGNTLTGFGQALA) is a signal peptide. An intrachain disulfide couples C32 to C107. S118 serves as the catalytic Nucleophile. C166 and C173 are disulfide-bonded. The active site involves H170. The active-site Proton donor/acceptor is the H183.

It belongs to the cutinase family. Post-translationally, the 2 disulfide bonds play a critical role in holding the catalytic residues in juxta-position; reduction of the disulfide bridges results in the complete inactivation of the enzyme.

The protein localises to the secreted. The enzyme catalyses cutin + H2O = cutin monomers.. In terms of biological role, catalyzes the hydrolysis of complex carboxylic polyesters found in the cell wall of plants. Degrades cutin, a macromolecule that forms the structure of the plant cuticle. Allows pathogenic fungi to penetrate through the cuticular barrier into the host plant during the initial stage of fungal infection. This Pyrenopeziza brassicae protein is Cutinase pbc1.